The following is a 230-amino-acid chain: Ly6/PLAUR domain-containing protein 8 (230 aa).

An N-terminal signal peptide occupies residues 1 to 20 (MKSFLFAGIVVVLTVAAVDT). 13 N-linked (GlcNAc...) asparagine glycosylation sites follow: Asn37, Asn44, Asn74, Asn77, Asn90, Asn106, Asn110, Asn132, Asn137, Asn156, Asn168, Asn181, and Asn197. The 48-residue stretch at 125–172 (CPACYGNNETSCNETRKCYGERCVSIIAEFTNETKTLVLKGCSNVSIS) folds into the UPAR/Ly6 domain. Residue Ser211 is the site of GPI-anchor amidated serine attachment. Positions 212–230 (QASFTPLALASILLLSLLL) are cleaved as a propeptide — removed in mature form.

This sequence belongs to the CNF-like-inhibitor family. Post-translationally, highly N-glycosylated. Not O-glycosylated. GPI-anchored. The GPI-anchor is cleaved, leading to secretion into the colonic lumen.

It is found in the cell membrane. The protein localises to the secreted. Functionally, secreted protein specifically required to prevent invasion of Gram-negative bacteria in the inner mucus layer of the colon epithelium, a portion of the large intestine which is free of commensal microbiota. Prevents invasion of flagellated microbiota by binding to the flagellum of bacteria, such as P.mirabilis, thereby inhibiting bacterial motility in the intestinal lumen. Segregation of intestinal bacteria and epithelial cells in the colon is required to preserve intestinal homeostasis. In Bos taurus (Bovine), this protein is Ly6/PLAUR domain-containing protein 8 (LYPD8).